Consider the following 205-residue polypeptide: Small ribosomal subunit protein uS4 (205 aa).

The tract at residues 26–47 (PVNKREYGPGQHGQRRKQKPSD) is disordered. The region spanning 94 to 154 (RRLDAVVYRL…EKSKHLAIVL (61 aa)) is the S4 RNA-binding domain.

This sequence belongs to the universal ribosomal protein uS4 family. In terms of assembly, part of the 30S ribosomal subunit. Contacts protein S5. The interaction surface between S4 and S5 is involved in control of translational fidelity.

One of the primary rRNA binding proteins, it binds directly to 16S rRNA where it nucleates assembly of the body of the 30S subunit. Functionally, with S5 and S12 plays an important role in translational accuracy. The chain is Small ribosomal subunit protein uS4 from Gluconacetobacter diazotrophicus (strain ATCC 49037 / DSM 5601 / CCUG 37298 / CIP 103539 / LMG 7603 / PAl5).